The following is a 182-amino-acid chain: Chromophore lyase CpcS/CpeS (182 aa).

This sequence belongs to the CpcS/CpeS biliprotein lyase family.

Covalently attaches a chromophore to Cys residue(s) of phycobiliproteins. In Thermosynechococcus vestitus (strain NIES-2133 / IAM M-273 / BP-1), this protein is Chromophore lyase CpcS/CpeS.